The primary structure comprises 253 residues: Major prion protein (253 aa).

The N-terminal stretch at 1–22 (MANLGCWMLVLFVATWSDLGLC) is a signal peptide. Positions 23-38 (KKRPKPGGWNTGGSRY) are interaction with ADGRG6. An interaction with GRB2, ERI3 and SYN1 region spans residues 23–230 (KKRPKPGGWN…ESQAYYQRGS (208 aa)). The interval 26–108 (PKPGGWNTGG…WNKPSKPKTN (83 aa)) is disordered. Repeat copies occupy residues 51 to 59 (PQGGGGWGQ), 60 to 67 (PHGGGWGQ), 68 to 75 (PHGGGWGQ), 76 to 83 (PHGGGWGQ), and 84 to 91 (PHGGGWGQ). The tract at residues 51 to 91 (PQGGGGWGQPHGGGWGQPHGGGWGQPHGGGWGQPHGGGWGQ) is 5 X 8 AA tandem repeats of P-H-G-G-G-W-G-Q. The span at 52–95 (QGGGGWGQPHGGGWGQPHGGGWGQPHGGGWGQPHGGGWGQGGGT) shows a compositional bias: gly residues. 12 residues coordinate Cu(2+): H61, G62, G63, H69, G70, G71, H77, G78, G79, H85, G86, and G87. Cysteines 179 and 214 form a disulfide. Residues N181 and N197 are each glycosylated (N-linked (GlcNAc...) asparagine). The GPI-anchor amidated serine moiety is linked to residue S230. The propeptide at 231-253 (SMVLFSSPPVILLISFLIFLIVG) is removed in mature form.

The protein belongs to the prion family. In terms of assembly, monomer and homodimer. Has a tendency to aggregate into amyloid fibrils containing a cross-beta spine, formed by a steric zipper of superposed beta-strands. Soluble oligomers may represent an intermediate stage on the path to fibril formation. Copper binding may promote oligomerization. Interacts with GRB2, APP, ERI3/PRNPIP and SYN1. Mislocalized cytosolically exposed PrP interacts with MGRN1; this interaction alters MGRN1 subcellular location and causes lysosomal enlargement. Interacts with KIAA1191. Interacts with ADGRG6. Post-translationally, the glycosylation pattern (the amount of mono-, di- and non-glycosylated forms or glycoforms) seems to differ in normal and CJD prion.

The protein resides in the cell membrane. The protein localises to the golgi apparatus. In terms of biological role, its primary physiological function is unclear. May play a role in neuronal development and synaptic plasticity. May be required for neuronal myelin sheath maintenance. May promote myelin homeostasis through acting as an agonist for ADGRG6 receptor. May play a role in iron uptake and iron homeostasis. Soluble oligomers are toxic to cultured neuroblastoma cells and induce apoptosis (in vitro). Association with GPC1 (via its heparan sulfate chains) targets PRNP to lipid rafts. Also provides Cu(2+) or Zn(2+) for the ascorbate-mediated GPC1 deaminase degradation of its heparan sulfate side chains. This is Major prion protein (PRNP) from Homo sapiens (Human).